Reading from the N-terminus, the 92-residue chain is UPF0250 protein XAC0666 (92 aa).

Belongs to the UPF0250 family.

The chain is UPF0250 protein XAC0666 from Xanthomonas axonopodis pv. citri (strain 306).